Reading from the N-terminus, the 512-residue chain is Maturase K (512 aa).

The protein belongs to the intron maturase 2 family. MatK subfamily.

It is found in the plastid. Its subcellular location is the chloroplast. Functionally, usually encoded in the trnK tRNA gene intron. Probably assists in splicing its own and other chloroplast group II introns. This chain is Maturase K, found in Amorphophallus abyssinicus (Black arum).